Consider the following 505-residue polypeptide: MITLTGHTLTVEEMKRLLLEGEGVTACPTSMQKVAECREVVEKIVEDGKVVYGITTGFGKFSDVLIQKDDVKALQHNLIQSHACGIGDPFPEEVSRGMLILRANTMLKGVSGVRPLVVNMLLEFVNRKIHPVVPQQGSLGASGDLAPLSHLALVLLGEGEVFYKGKRVHAMVALTEEGLEPIELEAKEGLALINGTQAMTAQGVLSYIEAEASAYQSELIASMTMEGLRGIIDAFDENVHKARGYKEQVEVASRIRDILHDSKLVTKQGELRVQDAYSLRCIPQVHGASWQVLNYVKEKLEIEMNAATDNPLIFDGGEKVISGGNFHGQPIAFAMDFLKVGMAELANISERRIERLVNPQLNDLPPFLSPEPGLQSGAMIMQYAAASLVSENKTLAHPASVDSIPSSANQEDHVSMGTIASRHAHQIIQNARRVLAIEMICAMQAAEYRGIENMSTVTKTFYHQGRQQVPSITNDRIFSTDIENIAHWLKTNYSIKERLDVNAAL.

The 5-imidazolinone (Ala-Gly) cross-link spans 141–143 (ASG). Ser-142 is subject to 2,3-didehydroalanine (Ser).

The protein belongs to the PAL/histidase family. Post-translationally, contains an active site 4-methylidene-imidazol-5-one (MIO), which is formed autocatalytically by cyclization and dehydration of residues Ala-Ser-Gly.

The protein localises to the cytoplasm. It carries out the reaction L-histidine = trans-urocanate + NH4(+). It functions in the pathway amino-acid degradation; L-histidine degradation into L-glutamate; N-formimidoyl-L-glutamate from L-histidine: step 1/3. In Bacillus mycoides (strain KBAB4) (Bacillus weihenstephanensis), this protein is Histidine ammonia-lyase.